Here is an 87-residue protein sequence, read N- to C-terminus: Small ribosomal subunit protein bS20 (87 aa).

A disordered region spans residues 1–28; it reads MANSAQARKRARQASAQRDHNMSQRSEL. Residues 17–28 show a composition bias toward basic and acidic residues; sequence QRDHNMSQRSEL.

It belongs to the bacterial ribosomal protein bS20 family.

Binds directly to 16S ribosomal RNA. In Thiobacillus denitrificans (strain ATCC 25259 / T1), this protein is Small ribosomal subunit protein bS20.